The following is a 231-amino-acid chain: Phosphoglycolate phosphatase (231 aa).

Catalysis depends on Asp-9, which acts as the Nucleophile. Asp-9 and Asp-11 together coordinate Mg(2+). Lys-154 provides a ligand contact to substrate. Positions 177 and 181 each coordinate Mg(2+).

This sequence belongs to the archaeal SPP-like hydrolase family. The cofactor is Mg(2+).

The catalysed reaction is 2-phosphoglycolate + H2O = glycolate + phosphate. Its function is as follows. Catalyzes the dephosphorylation of 2-phosphoglycolate. The protein is Phosphoglycolate phosphatase of Nitrosopumilus maritimus (strain SCM1).